The sequence spans 218 residues: Protein N-lysine methyltransferase METTL21A (218 aa).

Residues Trp-47, 73 to 75 (GAG), Asp-94, Trp-125, and Ala-143 contribute to the S-adenosyl-L-methionine site.

The protein belongs to the methyltransferase superfamily. METTL21 family. As to quaternary structure, interacts with heat shock protein 70 family members; at least some of these proteins are methylation substrates.

The protein resides in the cytoplasm. The enzyme catalyses L-lysyl-[protein] + 3 S-adenosyl-L-methionine = N(6),N(6),N(6)-trimethyl-L-lysyl-[protein] + 3 S-adenosyl-L-homocysteine + 3 H(+). Its function is as follows. Protein-lysine methyltransferase that selectively trimethylates residues in heat shock protein 70 (HSP70) family members. Contributes to the in vivo trimethylation of Lys residues in HSPA1 and HSPA8. In vitro methylates 'Lys-561' in HSPA1, 'Lys-564' in HSPA2, 'Lys-585' in HSPA5, 'Lys-563' in HSPA6 and 'Lys-561' in HSPA8. The sequence is that of Protein N-lysine methyltransferase METTL21A (METTL21A) from Homo sapiens (Human).